The following is a 578-amino-acid chain: XK-related protein 6 (578 aa).

7 helical membrane-spanning segments follow: residues 86–106, 114–134, 253–273, 307–327, 348–368, 377–397, and 410–430; these read WIVLALLVFFWDVGTDLWLAV, FLWSGLTLFFVLVPSVLVQIL, WLQCVSALSSLLSLAWVLASY, VLSLALFASVFHIYFGIFVVL, WEEVLFNMVVGVVYVFCWFNV, MVAYYVVVLLENVILTSLWYA, and LALCGVFLCFASGVACMVLYY.

This sequence belongs to the XK family.

The protein resides in the cell membrane. The polypeptide is XK-related protein 6 (xkr6) (Tetraodon nigroviridis (Spotted green pufferfish)).